The primary structure comprises 411 residues: LL-diaminopimelate aminotransferase (411 aa).

Tyr15 and Gly42 together coordinate substrate. Residues Tyr72, 108 to 109 (AK), Tyr132, Asn188, Tyr219, and 247 to 249 (SFS) each bind pyridoxal 5'-phosphate. Lys109, Tyr132, and Asn188 together coordinate substrate. Lys250 carries the N6-(pyridoxal phosphate)lysine modification. The pyridoxal 5'-phosphate site is built by Arg258 and Asn293. Residues Asn293 and Arg389 each coordinate substrate.

Belongs to the class-I pyridoxal-phosphate-dependent aminotransferase family. LL-diaminopimelate aminotransferase subfamily. In terms of assembly, homodimer. Requires pyridoxal 5'-phosphate as cofactor.

It catalyses the reaction (2S,6S)-2,6-diaminopimelate + 2-oxoglutarate = (S)-2,3,4,5-tetrahydrodipicolinate + L-glutamate + H2O + H(+). It participates in amino-acid biosynthesis; L-lysine biosynthesis via DAP pathway; LL-2,6-diaminopimelate from (S)-tetrahydrodipicolinate (aminotransferase route): step 1/1. In terms of biological role, involved in the synthesis of meso-diaminopimelate (m-DAP or DL-DAP), required for both lysine and peptidoglycan biosynthesis. Catalyzes the direct conversion of tetrahydrodipicolinate to LL-diaminopimelate. This chain is LL-diaminopimelate aminotransferase, found in Desulfitobacterium hafniense (strain Y51).